A 126-amino-acid chain; its full sequence is Follitropin subunit beta (126 aa).

A signal peptide spans Met1–Gln19. 6 disulfides stabilise this stretch: Cys21–Cys69, Cys35–Cys84, Cys38–Cys122, Cys46–Cys100, Cys50–Cys102, and Cys105–Cys112. N-linked (GlcNAc...) asparagine glycans are attached at residues Asn25 and Asn42.

This sequence belongs to the glycoprotein hormones subunit beta family. In terms of assembly, heterodimer. The active follitropin is a heterodimer composed of an alpha chain/CGA shared with other hormones and a unique beta chain/FSHB shown here.

The protein localises to the secreted. Together with the alpha chain CGA constitutes follitropin, the follicle-stimulating hormone, and provides its biological specificity to the hormone heterodimer. Binds FSHR, a G protein-coupled receptor, on target cells to activate downstream signaling pathways. Follitropin is involved in follicle development and spermatogenesis in reproductive organs. The chain is Follitropin subunit beta (FSHB) from Phodopus sungorus (Striped hairy-footed hamster).